Consider the following 176-residue polypeptide: Co-chaperone protein HscB homolog (176 aa).

Residues 8 to 80 (DFFALFGLPV…LRRATYLLKL (73 aa)) form the J domain.

Belongs to the HscB family. As to quaternary structure, interacts with HscA and stimulates its ATPase activity.

Its function is as follows. Co-chaperone involved in the maturation of iron-sulfur cluster-containing proteins. Seems to help targeting proteins to be folded toward HscA. This chain is Co-chaperone protein HscB homolog, found in Cupriavidus taiwanensis (strain DSM 17343 / BCRC 17206 / CCUG 44338 / CIP 107171 / LMG 19424 / R1) (Ralstonia taiwanensis (strain LMG 19424)).